Here is a 137-residue protein sequence, read N- to C-terminus: Cytochrome c-type biogenesis protein CcmE (137 aa).

Over 1-8 (MQKGAKNR) the chain is Cytoplasmic. The helical; Signal-anchor for type II membrane protein transmembrane segment at 9 to 29 (LITIIICFCSAVIGVSIILYN) threads the bilayer. Residues 30–137 (LEKSIVFFVP…NTVIPAKAGI (108 aa)) lie on the Periplasmic side of the membrane. Heme is bound by residues His-120 and Tyr-124.

This sequence belongs to the CcmE/CycJ family.

The protein localises to the cell inner membrane. Heme chaperone required for the biogenesis of c-type cytochromes. Transiently binds heme delivered by CcmC and transfers the heme to apo-cytochromes in a process facilitated by CcmF and CcmH. In Rickettsia bellii (strain OSU 85-389), this protein is Cytochrome c-type biogenesis protein CcmE.